The following is an 82-amino-acid chain: ATP synthase subunit c, chloroplastic (82 aa).

2 helical membrane-spanning segments follow: residues 3–23 (PLIA…ASIG) and 57–77 (LAFM…LLFA).

It belongs to the ATPase C chain family. F-type ATPases have 2 components, F(1) - the catalytic core - and F(0) - the membrane proton channel. F(1) has five subunits: alpha(3), beta(3), gamma(1), delta(1), epsilon(1). F(0) has four main subunits: a(1), b(1), b'(1) and c(10-14). The alpha and beta chains form an alternating ring which encloses part of the gamma chain. F(1) is attached to F(0) by a central stalk formed by the gamma and epsilon chains, while a peripheral stalk is formed by the delta, b and b' chains.

It is found in the plastid. The protein localises to the chloroplast thylakoid membrane. F(1)F(0) ATP synthase produces ATP from ADP in the presence of a proton or sodium gradient. F-type ATPases consist of two structural domains, F(1) containing the extramembraneous catalytic core and F(0) containing the membrane proton channel, linked together by a central stalk and a peripheral stalk. During catalysis, ATP synthesis in the catalytic domain of F(1) is coupled via a rotary mechanism of the central stalk subunits to proton translocation. In terms of biological role, key component of the F(0) channel; it plays a direct role in translocation across the membrane. A homomeric c-ring of between 10-14 subunits forms the central stalk rotor element with the F(1) delta and epsilon subunits. This chain is ATP synthase subunit c, chloroplastic, found in Nephroselmis olivacea (Green alga).